Reading from the N-terminus, the 115-residue chain is Large ribosomal subunit protein bL20 (115 aa).

The protein belongs to the bacterial ribosomal protein bL20 family.

Functionally, binds directly to 23S ribosomal RNA and is necessary for the in vitro assembly process of the 50S ribosomal subunit. It is not involved in the protein synthesizing functions of that subunit. In Prochlorococcus marinus (strain NATL2A), this protein is Large ribosomal subunit protein bL20.